A 131-amino-acid polypeptide reads, in one-letter code: D-ribose pyranase (131 aa).

His20 functions as the Proton donor in the catalytic mechanism. Residues Asp28, His98, and 120–122 (YAN) each bind substrate.

This sequence belongs to the RbsD / FucU family. RbsD subfamily. Homodecamer.

The protein resides in the cytoplasm. The enzyme catalyses beta-D-ribopyranose = beta-D-ribofuranose. Its pathway is carbohydrate metabolism; D-ribose degradation; D-ribose 5-phosphate from beta-D-ribopyranose: step 1/2. Its function is as follows. Catalyzes the interconversion of beta-pyran and beta-furan forms of D-ribose. This Bacillus cereus (strain ATCC 10987 / NRS 248) protein is D-ribose pyranase.